The sequence spans 142 residues: Large ribosomal subunit protein uL11 (142 aa).

Belongs to the universal ribosomal protein uL11 family. As to quaternary structure, part of the ribosomal stalk of the 50S ribosomal subunit. Interacts with L10 and the large rRNA to form the base of the stalk. L10 forms an elongated spine to which L12 dimers bind in a sequential fashion forming a multimeric L10(L12)X complex. In terms of processing, one or more lysine residues are methylated.

In terms of biological role, forms part of the ribosomal stalk which helps the ribosome interact with GTP-bound translation factors. The sequence is that of Large ribosomal subunit protein uL11 from Bartonella henselae (strain ATCC 49882 / DSM 28221 / CCUG 30454 / Houston 1) (Rochalimaea henselae).